The primary structure comprises 201 residues: Protein VirD3 (201 aa).

Disordered stretches follow at residues 28–51 (ASSSALSNVQGDVRDRPIPTSSSR) and 139–171 (RVNSDRRLPTDAENHPETRDPRKGRGSHGVTPA). Over residues 141–161 (NSDRRLPTDAENHPETRDPRK) the composition is skewed to basic and acidic residues.

This chain is Protein VirD3 (virD3), found in Rhizobium radiobacter (Agrobacterium tumefaciens).